The chain runs to 323 residues: Aldo-keto reductase family 1 member C3 (323 aa).

NADP(+)-binding positions include 23 to 24 and Asp-50; that span reads TY. Tyr-55 functions as the Proton donor in the catalytic mechanism. A substrate-binding site is contributed by His-117. NADP(+)-binding positions include 166–167, Gln-190, 216–222, 270–272, and 276–280; these read SN, YSALGSQ, KSY, and RIRQN.

Belongs to the aldo/keto reductase family. Expressed in many tissues including adrenal gland, brain, kidney, liver, lung, mammary gland, placenta, small intestine, colon, spleen, prostate and testis. High expression in prostate and mammary gland. In the prostate, higher levels in epithelial cells than in stromal cells. In the brain, expressed in medulla, spinal cord, frontotemporal lobes, thalamus, subthalamic nuclei and amygdala. Weaker expression in the hippocampus, substantia nigra and caudate.

The protein resides in the cytoplasm. It carries out the reaction a 3alpha-hydroxysteroid + NADP(+) = a 3-oxosteroid + NADPH + H(+). The catalysed reaction is a 3alpha-hydroxysteroid + NAD(+) = a 3-oxosteroid + NADH + H(+). The enzyme catalyses prostaglandin F2alpha + NADP(+) = prostaglandin D2 + NADPH + H(+). It catalyses the reaction prostaglandin F2alpha + NADP(+) = prostaglandin H2 + NADPH + H(+). It carries out the reaction prostaglandin D2 + NADPH + H(+) = 11beta-prostaglandin F2 + NADP(+). The catalysed reaction is prostaglandin D2-ethanolamide + NADPH + H(+) = 11beta-prostaglandin F2-ethanolamide + NADP(+). The enzyme catalyses testosterone + NAD(+) = androst-4-ene-3,17-dione + NADH + H(+). It catalyses the reaction testosterone + NADP(+) = androst-4-ene-3,17-dione + NADPH + H(+). It carries out the reaction 17beta-estradiol + NADP(+) = estrone + NADPH + H(+). The catalysed reaction is 17beta-estradiol + NAD(+) = estrone + NADH + H(+). The enzyme catalyses (20S)-hydroxypregn-4-en-3-one + NADP(+) = progesterone + NADPH + H(+). It catalyses the reaction (20S)-hydroxypregn-4-en-3-one + NAD(+) = progesterone + NADH + H(+). It carries out the reaction 5alpha-androstane-3alpha,17beta-diol + NADP(+) = 17beta-hydroxy-5alpha-androstan-3-one + NADPH + H(+). The catalysed reaction is 5alpha-androstane-3alpha,17beta-diol + NAD(+) = 17beta-hydroxy-5alpha-androstan-3-one + NADH + H(+). The enzyme catalyses androsterone + NADPH + H(+) = 5alpha-androstane-3alpha,17beta-diol + NADP(+). It catalyses the reaction 5alpha-androstane-3alpha,17beta-diol + NAD(+) = androsterone + NADH + H(+). It carries out the reaction 5alpha-androstane-3beta,17beta-diol + NADP(+) = 17beta-hydroxy-5alpha-androstan-3-one + NADPH + H(+). The catalysed reaction is 9-cis-retinol + NADP(+) = 9-cis-retinal + NADPH + H(+). Its pathway is steroid metabolism. With respect to regulation, strongly inhibited by nonsteroidal anti-inflammatory drugs (NSAID) including flufenamic acid and indomethacin. Also inhibited by the flavinoid, rutin, and by selective serotonin inhibitors (SSRIs). The oxidation reaction is inhibited by low micromolar concentrations of NADPH. Its function is as follows. Cytosolic aldo-keto reductase that catalyzes the NADH and NADPH-dependent reduction of ketosteroids to hydroxysteroids. Acts as a NAD(P)(H)-dependent 3-, 17- and 20-ketosteroid reductase on the steroid nucleus and side chain and regulates the metabolism of androgens, estrogens and progesterone. Displays the ability to catalyze both oxidation and reduction in vitro, but most probably acts as a reductase in vivo since the oxidase activity measured in vitro is inhibited by physiological concentration of NADPH. Acts preferentially as a 17-ketosteroid reductase and has the highest catalytic efficiency of the AKR1C enzyme for the reduction of delta4-androstenedione to form testosterone. Reduces prostaglandin (PG) D2 to 11beta-prostaglandin F2, progesterone to 20alpha-hydroxyprogesterone and estrone to 17beta-estradiol. Catalyzes the transformation of the potent androgen dihydrotestosterone (DHT) into the less active form, 5-alpha-androstan-3-alpha,17-beta-diol (3-alpha-diol). Also displays retinaldehyde reductase activity toward 9-cis-retinal. The sequence is that of Aldo-keto reductase family 1 member C3 (AKR1C3) from Homo sapiens (Human).